We begin with the raw amino-acid sequence, 300 residues long: Probable ABC transporter permease protein YurM (300 aa).

Transmembrane regions (helical) follow at residues 37–57, 98–118, 129–149, 161–181, 204–224, and 264–284; these read VWVF…WMVM, VIVT…AAYG, FFLV…LVPL, TYWA…IILI, FGVF…TSGI, and WGVL…LFLL. The ABC transmembrane type-1 domain maps to 94–285; sequence FMNSVIVTAL…APIIILFLLM (192 aa).

It belongs to the binding-protein-dependent transport system permease family. MalFG subfamily.

It is found in the cell membrane. Probably part of the binding-protein-dependent transport system YurMNO. Probably responsible for the translocation of the substrate across the membrane. The chain is Probable ABC transporter permease protein YurM (yurM) from Bacillus subtilis (strain 168).